The following is a 160-amino-acid chain: Lipoprotein signal peptidase (160 aa).

Helical transmembrane passes span 63-83 and 89-109; these read YRLP…AVTF and DQHL…GNLI. Residues aspartate 119 and aspartate 137 contribute to the active site. The helical transmembrane segment at 132 to 152 threads the bilayer; the sequence is AFNVADSAICVGVALLAVDMI.

It belongs to the peptidase A8 family.

Its subcellular location is the cell inner membrane. The catalysed reaction is Release of signal peptides from bacterial membrane prolipoproteins. Hydrolyzes -Xaa-Yaa-Zaa-|-(S,diacylglyceryl)Cys-, in which Xaa is hydrophobic (preferably Leu), and Yaa (Ala or Ser) and Zaa (Gly or Ala) have small, neutral side chains.. It functions in the pathway protein modification; lipoprotein biosynthesis (signal peptide cleavage). In terms of biological role, this protein specifically catalyzes the removal of signal peptides from prolipoproteins. This is Lipoprotein signal peptidase from Geobacter sulfurreducens (strain ATCC 51573 / DSM 12127 / PCA).